The sequence spans 1185 residues: Zinc finger SWIM domain-containing protein 5 (1185 aa).

Residues 1-10 (MADGGEREEL) show a composition bias toward basic and acidic residues. Disordered regions lie at residues 1–45 (MADG…GGAG) and 123–153 (AGAAGGAAGASPAEEGPQPPPGAAAPAGSAP). The segment at 219 to 256 (YKVAISFDRCKITSVTCGCGNKDIFYCAHVVALSLYRI) adopts an SWIM-type zinc-finger fold.

In Homo sapiens (Human), this protein is Zinc finger SWIM domain-containing protein 5 (ZSWIM5).